A 245-amino-acid chain; its full sequence is Phycocyanobilin:ferredoxin oxidoreductase (245 aa).

The protein belongs to the HY2 family.

It carries out the reaction (2R,3Z)-phycocyanobilin + 4 oxidized [2Fe-2S]-[ferredoxin] = biliverdin IXalpha + 4 reduced [2Fe-2S]-[ferredoxin] + 4 H(+). Functionally, catalyzes the four-electron reduction of biliverdin IX-alpha (2-electron reduction at both the A and D rings); the reaction proceeds via an isolatable 2-electron intermediate, 181,182-dihydrobiliverdin. The sequence is that of Phycocyanobilin:ferredoxin oxidoreductase from Rippkaea orientalis (strain PCC 8801 / RF-1) (Cyanothece sp. (strain PCC 8801)).